A 653-amino-acid chain; its full sequence is Biotin biosynthesis bifunctional protein BioWF (653 aa).

R278 contributes to the substrate binding site. Residue G365 to Y366 participates in pyridoxal 5'-phosphate binding. H390 is a substrate binding site. Residues S436, D461–H464, and T492–K495 contribute to the pyridoxal 5'-phosphate site. Position 495 is an N6-(pyridoxal phosphate)lysine (K495).

The protein in the N-terminal section; belongs to the BioW family. It in the C-terminal section; belongs to the class-II pyridoxal-phosphate-dependent aminotransferase family. BioF subfamily. As to quaternary structure, homodimer. Requires Mg(2+) as cofactor. The cofactor is pyridoxal 5'-phosphate.

The catalysed reaction is heptanedioate + ATP + CoA = 6-carboxyhexanoyl-CoA + AMP + diphosphate. The enzyme catalyses 6-carboxyhexanoyl-[ACP] + L-alanine + H(+) = (8S)-8-amino-7-oxononanoate + holo-[ACP] + CO2. The protein operates within metabolic intermediate metabolism; pimeloyl-CoA biosynthesis; pimeloyl-CoA from pimelate: step 1/1. It functions in the pathway cofactor biosynthesis; biotin biosynthesis. Its function is as follows. Catalyzes both the decarboxylative condensation of pimeloyl-[acyl-carrier protein] and L-alanine to produce 8-amino-7-oxononanoate (AON), [acyl-carrier protein], and carbon dioxide, and the transformation of pimelate into pimeloyl-CoA with concomitant hydrolysis of ATP to AMP. This Cutibacterium acnes (strain DSM 16379 / KPA171202) (Propionibacterium acnes) protein is Biotin biosynthesis bifunctional protein BioWF.